We begin with the raw amino-acid sequence, 81 residues long: GAMMA-ctenitoxin-Pn1a (81 aa).

The N-terminal stretch at 1 to 16 (MKVAIVFLSLLVLAFA) is a signal peptide. The propeptide occupies 17–34 (SESIEENREEFPVEESAR). Disulfide bonds link C35–C49, C42–C55, C46–C81, C48–C65, and C57–C63.

Belongs to the neurotoxin 03 (Tx2) family. 05 subfamily. In terms of tissue distribution, expressed by the venom gland.

The protein localises to the secreted. This insecticidal neurotoxin targets two types of channels/receptors. It reversibly inhibits the N-methyl-D-aspartate (NMDA)-subtype of ionotropic glutamate receptor (GRIN). It inhibits glutamate uptake from rat brain synaptosomes, and blocks GRIN in hippocampal slices. It also acts on sodium channels of both insects and mammals. On sodium channel insects, it strongly slows down channel inactivation (EC(50)=212.5 nM) and causes an increase (105%) in peak amplitude (at 1 uM) of B.germanica sodium channel (Nav), whereas it inhibits all mammalien sodium channels tested with the following order of potency: Nav1.3/SCN3A (IC(50)=1.5 uM) &gt; Nav1.6/SCN8A &gt; Nav1.5/SCN5A &gt; Nav1.4/SCN4A &gt;= Nav1.2/SCN2A. In vivo, it is highly toxic to house fly (Musca domestica), cockroach (Periplaneta americana), and cricket (Acheta domesticus). In different rat pain models (induced by PGE2, carrageenan or glutamate), it shows antinociceptive effect that may be related to an inhibitory activity on the glutamatergic system. This Phoneutria nigriventer (Brazilian armed spider) protein is GAMMA-ctenitoxin-Pn1a.